The chain runs to 153 residues: NADPH-dependent 7-cyano-7-deazaguanine reductase (153 aa).

The disordered stretch occupies residues 1 to 30 (MDSIETHAKQLGQQTPLPASPEAAQLDRVP). The active-site Thioimide intermediate is C51. D58 serves as the catalytic Proton donor. Residues 73 to 75 (VES) and 92 to 93 (HE) contribute to the substrate site.

Belongs to the GTP cyclohydrolase I family. QueF type 1 subfamily.

The protein localises to the cytoplasm. The catalysed reaction is 7-aminomethyl-7-carbaguanine + 2 NADP(+) = 7-cyano-7-deazaguanine + 2 NADPH + 3 H(+). Its pathway is tRNA modification; tRNA-queuosine biosynthesis. Catalyzes the NADPH-dependent reduction of 7-cyano-7-deazaguanine (preQ0) to 7-aminomethyl-7-deazaguanine (preQ1). The protein is NADPH-dependent 7-cyano-7-deazaguanine reductase of Methylorubrum extorquens (strain CM4 / NCIMB 13688) (Methylobacterium extorquens).